The following is a 714-amino-acid chain: Fatty acid oxidation complex subunit alpha (714 aa).

Positions 1-190 (MDMTSAFTLN…KSGLVDEIVP (190 aa)) are enoyl-CoA hydratase. The tract at residues 306–714 (GTLDSIGILG…FWKTSATDRH (409 aa)) is 3-hydroxyacyl-CoA dehydrogenase.

The protein in the N-terminal section; belongs to the enoyl-CoA hydratase/isomerase family. This sequence in the central section; belongs to the 3-hydroxyacyl-CoA dehydrogenase family. As to quaternary structure, heterotetramer of two alpha chains (FadJ) and two beta chains (FadI).

The protein localises to the cytoplasm. The catalysed reaction is a (3S)-3-hydroxyacyl-CoA = a (2E)-enoyl-CoA + H2O. It catalyses the reaction a 4-saturated-(3S)-3-hydroxyacyl-CoA = a (3E)-enoyl-CoA + H2O. It carries out the reaction a (3S)-3-hydroxyacyl-CoA + NAD(+) = a 3-oxoacyl-CoA + NADH + H(+). The enzyme catalyses (3S)-3-hydroxybutanoyl-CoA = (3R)-3-hydroxybutanoyl-CoA. Its pathway is lipid metabolism; fatty acid beta-oxidation. Its function is as follows. Catalyzes the formation of a hydroxyacyl-CoA by addition of water on enoyl-CoA. Also exhibits 3-hydroxyacyl-CoA epimerase and 3-hydroxyacyl-CoA dehydrogenase activities. In Escherichia fergusonii (strain ATCC 35469 / DSM 13698 / CCUG 18766 / IAM 14443 / JCM 21226 / LMG 7866 / NBRC 102419 / NCTC 12128 / CDC 0568-73), this protein is Fatty acid oxidation complex subunit alpha.